Here is a 123-residue protein sequence, read N- to C-terminus: MADLAKIVEDLSNLTLLEAAELSKLLEEKWGVSAAAPVAVATVAGAAAPAAEEKTEFDVILVDCGAQKINVIKEVRALTGLGLKEAKDLVEGAPKPIKEGASKDEAEKIKSQLEAAGAKVEFK.

The protein belongs to the bacterial ribosomal protein bL12 family. Homodimer. Part of the ribosomal stalk of the 50S ribosomal subunit. Forms a multimeric L10(L12)X complex, where L10 forms an elongated spine to which 2 to 4 L12 dimers bind in a sequential fashion. Binds GTP-bound translation factors.

Functionally, forms part of the ribosomal stalk which helps the ribosome interact with GTP-bound translation factors. Is thus essential for accurate translation. In Bartonella quintana (strain Toulouse) (Rochalimaea quintana), this protein is Large ribosomal subunit protein bL12.